The following is a 290-amino-acid chain: Thymidylate synthase (290 aa).

Residues Arg27 and 152–153 contribute to the dUMP site; that span reads RR. Cys172 (nucleophile) is an active-site residue. DUMP is bound by residues 192–195, Asn203, and 233–235; these read RSAD and HVY. Asp195 provides a ligand contact to (6R)-5,10-methylene-5,6,7,8-tetrahydrofolate. Ala289 lines the (6R)-5,10-methylene-5,6,7,8-tetrahydrofolate pocket.

This sequence belongs to the thymidylate synthase family. As to quaternary structure, homodimer.

It carries out the reaction dUMP + (6R)-5,10-methylene-5,6,7,8-tetrahydrofolate = 7,8-dihydrofolate + dTMP. It participates in pyrimidine metabolism; dTTP biosynthesis. This chain is Thymidylate synthase (TS), found in Ateles.